The primary structure comprises 339 residues: MTEGVTVQKVQSASSNGHKPNTVISQIISEMQSLLGSSFEVYTKTMTDFLIGQLSRKEMKSMLLTFAGKSNFDKLHNSIIFHILKLMQKNNDTFSALHHLPWFKRKKVDNSLFLHKKISSQNAQVRLIKRIVMSLSYKDRARIKTALKEKPVTPSLISGLLLETRIAKLPKIPVSRDKLNSVFVNDIKAGYVAPLACETLELPDSESLKERITAISLENGLLGGVQKGVSDIILAGLESHLKNILSRCFSILNKNIRQKNTENDAAGFTINDLNLAWTIEPHAFVEQYPQKLRMPFLLHDSYTEDEISICAESPSYMLASNDAQSDRNSVASLLDEVLS.

This sequence belongs to the HFI1 family. As to quaternary structure, component of the 1.8 MDa SAGA (Spt-Ada-Gcn5 acetyltransferase) complex, which is composed of 19 subunits tra1, spt7, taf5, ngg1/ada3, sgf73, spt20, spt8, taf12, taf6, hfi1/ada1, ubp8, gcn5, ada2, spt3, sgf29, taf10, taf9, sgf11 and sus1. The SAGA complex is composed of 4 modules, namely the HAT (histone acetyltransferase) module (gcn5, ada2, ngg1/ada3 and sgf29), the DUB (deubiquitinating) module (ubp8, sgf11, sgf73 and sus1), the core or TAF (TBP-associated factor) module (taf5, taf6, taf9, taf10 and taf12), and the Tra1 or SPT (Suppressor of Ty) module (tra1, hfi1/ada1, spt3, spt7, spt8 and spt20). The Tra1/SPT module binds activators, the core module recruits TBP (TATA-binding protein), the HAT module contains the histone H3 acetyltransferase gcn5, and the DUB module comprises the histone H2B deubiquitinase ubp8.

The protein resides in the nucleus. Functionally, component of the transcription coactivator SAGA complex. SAGA acts as a general cofactor required for essentially all RNA polymerase II transcription. At the promoters, SAGA is required for transcription pre-initiation complex (PIC) recruitment. It influences RNA polymerase II transcriptional activity through different activities such as TBP interaction (via core/TAF module) and promoter selectivity, interaction with transcription activators (via Tra1/SPT module), and chromatin modification through histone acetylation (via HAT module) and deubiquitination (via DUB module). SAGA preferentially acetylates histones H3 (to form H3K9ac, H3K14ac, H3K18ac and H3K23ac) and H2B and deubiquitinates histone H2B. SAGA interacts with DNA via upstream activating sequences (UASs). This chain is SAGA complex subunit Hfi1 (hfi1), found in Schizosaccharomyces pombe (strain 972 / ATCC 24843) (Fission yeast).